The sequence spans 322 residues: Cytochrome f (322 aa).

The signal sequence occupies residues 1–35 (MQTRNTFSWTWIREEITRSISVSLMIYIITWSSIS). Heme contacts are provided by Tyr38, Cys58, Cys61, and His62. A helical membrane pass occupies residues 288-308 (VQGLLFFLGSVVLAQIFLVLK).

It belongs to the cytochrome f family. As to quaternary structure, the 4 large subunits of the cytochrome b6-f complex are cytochrome b6, subunit IV (17 kDa polypeptide, petD), cytochrome f and the Rieske protein, while the 4 small subunits are PetG, PetL, PetM and PetN. The complex functions as a dimer. Requires heme as cofactor.

The protein resides in the plastid. It localises to the chloroplast thylakoid membrane. Its function is as follows. Component of the cytochrome b6-f complex, which mediates electron transfer between photosystem II (PSII) and photosystem I (PSI), cyclic electron flow around PSI, and state transitions. The sequence is that of Cytochrome f from Aethionema grandiflorum (Persian stone-cress).